The following is a 78-amino-acid chain: Beta-defensin 12 (78 aa).

The first 27 residues, 1-27, serve as a signal peptide directing secretion; it reads MALSRGTFYFGLALFFIVVELPSGSWA. 3 disulfide bridges follow: cysteine 46/cysteine 73, cysteine 53/cysteine 67, and cysteine 57/cysteine 74.

The protein belongs to the beta-defensin family.

Its subcellular location is the secreted. Functionally, has antibacterial activity. This chain is Beta-defensin 12 (Defb12), found in Rattus norvegicus (Rat).